A 586-amino-acid chain; its full sequence is Major facilitator superfamily domain-containing protein 6-like (586 aa).

The next 2 membrane-spanning stretches (helical) occupy residues 50–70 (TLMGTKHLIAAFWAPVCAFLA) and 78–98 (ALLIGSLLGSVGASLLMVLVP). The interval 133–160 (AQESASSHPAKRTAEVEMPGFRNPPGES) is disordered. The next 9 helical transmembrane spans lie at 246–266 (FILSLGSVAFWELLTAPLEQV), 287–307 (LWVWRLLGMSAGVCGITALVG), 326–346 (GYSVVSTLALLVSIAFPIPIC), 361–381 (IVGGDPHLILLASTTVLVGAI), 400–420 (ELVMGFSVALSLLGEILLHPF), 433–455 (LVGLGLSCLAGQLLYYSFLWSWW), 456–476 (SVLPIQILSAISNRALWWAVG), 499–519 (FYGSGCSLGSFVGGFVVMRFS), and 521–541 (AVLYQACCVALLLWLALLLSI).

The protein belongs to the major facilitator superfamily. MFSD6 family.

It localises to the membrane. This Homo sapiens (Human) protein is Major facilitator superfamily domain-containing protein 6-like (MFSD6L).